A 372-amino-acid chain; its full sequence is Alanine dehydrogenase 1 (372 aa).

His94 is a catalytic residue. An NAD(+)-binding site is contributed by Thr170 to Asn200.

This sequence belongs to the AlaDH/PNT family.

It carries out the reaction L-alanine + NAD(+) + H2O = pyruvate + NH4(+) + NADH + H(+). It participates in amino-acid degradation; L-alanine degradation via dehydrogenase pathway; NH(3) and pyruvate from L-alanine: step 1/1. May play a role in cell wall synthesis as L-alanine is an important constituent of the peptidoglycan layer. This chain is Alanine dehydrogenase 1 (ald1), found in Staphylococcus aureus (strain bovine RF122 / ET3-1).